We begin with the raw amino-acid sequence, 301 residues long: Mycothiol acetyltransferase (301 aa).

2 N-acetyltransferase domains span residues 7–150 (VDWQ…PPVD) and 152–301 (VRFA…AVEG). Asp39 is a binding site for 1D-myo-inositol 2-(L-cysteinylamino)-2-deoxy-alpha-D-glucopyranoside. Residues 80-82 (LVV) and 88-93 (RRGIGS) contribute to the acetyl-CoA site. 3 residues coordinate 1D-myo-inositol 2-(L-cysteinylamino)-2-deoxy-alpha-D-glucopyranoside: Glu179, Lys220, and Glu228. Residue 232–234 (VGV) participates in acetyl-CoA binding. Residue Tyr271 participates in 1D-myo-inositol 2-(L-cysteinylamino)-2-deoxy-alpha-D-glucopyranoside binding. Residue 276–281 (NTAAVK) participates in acetyl-CoA binding.

It belongs to the acetyltransferase family. MshD subfamily. Monomer.

It catalyses the reaction 1D-myo-inositol 2-(L-cysteinylamino)-2-deoxy-alpha-D-glucopyranoside + acetyl-CoA = mycothiol + CoA + H(+). In terms of biological role, catalyzes the transfer of acetyl from acetyl-CoA to desacetylmycothiol (Cys-GlcN-Ins) to form mycothiol. This Mycolicibacterium vanbaalenii (strain DSM 7251 / JCM 13017 / BCRC 16820 / KCTC 9966 / NRRL B-24157 / PYR-1) (Mycobacterium vanbaalenii) protein is Mycothiol acetyltransferase.